The sequence spans 137 residues: MRILGLDVGTKTVGVAMSDEMGWTAQGLETIKINEERGHFGFDRISELVKQYNVDKIVVGLPKNMNGTIGPRGEACQQFAENLRELLQLDVVMWDERLSTMAAERLLISADVSRKKRKQVIDKMAAVVILQGFLDSK.

Belongs to the YqgF nuclease family.

The protein resides in the cytoplasm. Could be a nuclease involved in processing of the 5'-end of pre-16S rRNA. The chain is Putative pre-16S rRNA nuclease from Bacillus cereus (strain G9842).